A 264-amino-acid chain; its full sequence is Thymidylate synthase (264 aa).

DUMP is bound at residue Arg-21. His-51 lines the (6R)-5,10-methylene-5,6,7,8-tetrahydrofolate pocket. 126–127 (RR) lines the dUMP pocket. The active-site Nucleophile is Cys-146. Residues 166 to 169 (RSAD), Asn-177, and 207 to 209 (HLY) contribute to the dUMP site. Asp-169 contributes to the (6R)-5,10-methylene-5,6,7,8-tetrahydrofolate binding site. Ala-263 contacts (6R)-5,10-methylene-5,6,7,8-tetrahydrofolate.

It belongs to the thymidylate synthase family. Bacterial-type ThyA subfamily. As to quaternary structure, homodimer.

It is found in the cytoplasm. It carries out the reaction dUMP + (6R)-5,10-methylene-5,6,7,8-tetrahydrofolate = 7,8-dihydrofolate + dTMP. Its pathway is pyrimidine metabolism; dTTP biosynthesis. Its function is as follows. Catalyzes the reductive methylation of 2'-deoxyuridine-5'-monophosphate (dUMP) to 2'-deoxythymidine-5'-monophosphate (dTMP) while utilizing 5,10-methylenetetrahydrofolate (mTHF) as the methyl donor and reductant in the reaction, yielding dihydrofolate (DHF) as a by-product. This enzymatic reaction provides an intracellular de novo source of dTMP, an essential precursor for DNA biosynthesis. The protein is Thymidylate synthase of Legionella pneumophila subsp. pneumophila (strain Philadelphia 1 / ATCC 33152 / DSM 7513).